The following is a 433-amino-acid chain: SPI-2 type 3 secretion system ATPase (433 aa).

165–170 is an ATP binding site; sequence GVGKST.

This sequence belongs to the ATPase alpha/beta chains family. T3SS ATPase subfamily. In terms of assembly, the core secretion machinery of the T3SS is composed of approximately 20 different proteins, including cytoplasmic components, a base, an export apparatus and a needle. This subunit is part of the cytosolic complex. Forms homohexamers. Forms a complex with SsaK/SctL (stator protein) and SsaQ/SctQ (the major sorting platform component). Interacts with the T3SS-2 specific chaperones SsaE, SseA, SscA, SscB, and SrcA.

It is found in the cytoplasm. The enzyme catalyses ATP + H2O + cellular proteinSide 1 = ADP + phosphate + cellular proteinSide 2.. Functionally, ATPase component of the type III secretion system (T3SS), also called injectisome, which is used to inject bacterial effector proteins into eukaryotic host cells. Acts as a molecular motor to provide the energy that is required for the export of proteins. Required for type III secretion apparatus (T3SA) formation, secretion of a subset of SPI-2 effectors and virulence. May play a critical role in T3SS substrate recognition, disassembly of the effector/chaperone complex and unfolding of the effector in an ATP-dependent manner prior to secretion. Releases the effector protein SseB from the T3SS-2 specific chaperone SsaE in an ATP-dependent manner. This is SPI-2 type 3 secretion system ATPase from Salmonella typhimurium (strain LT2 / SGSC1412 / ATCC 700720).